The primary structure comprises 447 residues: N-succinylarginine dihydrolase (447 aa).

Substrate is bound by residues 19–28 (AGLSVGNKAS), Asn110, and 137–138 (HR). Residue Glu174 is part of the active site. Arg213 lines the substrate pocket. The active site involves His249. Substrate is bound by residues Asp251 and Asn365. The active-site Nucleophile is Cys371.

The protein belongs to the succinylarginine dihydrolase family. Homodimer.

It carries out the reaction N(2)-succinyl-L-arginine + 2 H2O + 2 H(+) = N(2)-succinyl-L-ornithine + 2 NH4(+) + CO2. It functions in the pathway amino-acid degradation; L-arginine degradation via AST pathway; L-glutamate and succinate from L-arginine: step 2/5. In terms of biological role, catalyzes the hydrolysis of N(2)-succinylarginine into N(2)-succinylornithine, ammonia and CO(2). This chain is N-succinylarginine dihydrolase, found in Photorhabdus laumondii subsp. laumondii (strain DSM 15139 / CIP 105565 / TT01) (Photorhabdus luminescens subsp. laumondii).